A 29-amino-acid chain; its full sequence is Potassium channel toxin alpha-KTx 8.3 (29 aa).

Intrachain disulfides connect cysteine 3–cysteine 19, cysteine 6–cysteine 24, and cysteine 10–cysteine 26.

This sequence belongs to the short scorpion toxin superfamily. Potassium channel inhibitor family. Alpha-KTx 08 subfamily. Expressed by the venom gland.

Its subcellular location is the secreted. Functionally, specific and potent inhibitor of ClC-2/CLCN2 chloride channel. It slows ClC-2/CLCN2 activation by increasing the latency to first opening by nearly 8-fold but is unable to inhibit open channels, suggesting that this toxin inhibits channel activation gating. In Leiurus hebraeus (Hebrew deathstalker scorpion), this protein is Potassium channel toxin alpha-KTx 8.3.